The sequence spans 519 residues: O-fucosyltransferase 1 (519 aa).

Topologically, residues 1–24 are cytoplasmic; the sequence is MRRLGHHRLHGKTGGVGTKGMVAK. Residues 25–45 form a helical; Signal-anchor for type II membrane protein membrane-spanning segment; that stretch reads LSIGVIVLLICTLSLLFSANI. The Lumenal segment spans residues 46–519; the sequence is GSNREPTRPS…TNSTVTGLER (474 aa). A disordered region spans residues 67 to 86; that stretch reads KSGGWRPSSAPRSDWPPPTK. Asn-118 carries N-linked (GlcNAc...) asparagine glycosylation. Residue 260 to 262 participates in substrate binding; that stretch reads HLR. N-linked (GlcNAc...) asparagine glycosylation is found at Asn-327, Asn-357, and Asn-511. The tract at residues 497 to 519 is disordered; the sequence is RLESIRDPDSTSQTNSTVTGLER. Over residues 506-519 the composition is skewed to polar residues; sequence STSQTNSTVTGLER.

Belongs to the glycosyltransferase GT106 family.

The protein resides in the golgi apparatus membrane. It participates in glycan metabolism. In Arabidopsis thaliana (Mouse-ear cress), this protein is O-fucosyltransferase 1.